The chain runs to 308 residues: Ribosomal protein uL3 glutamine methyltransferase (308 aa).

This sequence belongs to the protein N5-glutamine methyltransferase family. PrmB subfamily.

The catalysed reaction is L-glutaminyl-[ribosomal protein uL3] + S-adenosyl-L-methionine = N(5)-methyl-L-glutaminyl-[ribosomal protein uL3] + S-adenosyl-L-homocysteine + H(+). Methylates large ribosomal subunit protein uL3 on a specific glutamine residue. This Xanthomonas campestris pv. campestris (strain ATCC 33913 / DSM 3586 / NCPPB 528 / LMG 568 / P 25) protein is Ribosomal protein uL3 glutamine methyltransferase.